Reading from the N-terminus, the 338-residue chain is NADPH dehydrogenase (338 aa).

23 to 26 (SPMC) lines the FMN pocket. Y28 provides a ligand contact to substrate. FMN is bound by residues A60 and Q102. 164-167 (HAAH) lines the substrate pocket. Residues R215 and 307–308 (GR) contribute to the FMN site.

The protein belongs to the NADH:flavin oxidoreductase/NADH oxidase family. NamA subfamily. In terms of assembly, homotetramer. Composed of a dimer of active dimers. It depends on FMN as a cofactor.

The enzyme catalyses A + NADPH + H(+) = AH2 + NADP(+). Inhibited by p-hydroxybenzaldehyde (pHBA) and p-nitrophenol (pNP). In terms of biological role, catalyzes the reduction of the double bond of an array of alpha,beta-unsaturated aldehydes and ketones. It also reduces the nitro group of nitroester and nitroaromatic compounds. It could have a role in detoxification processes. The protein is NADPH dehydrogenase (namA) of Bacillus subtilis (strain 168).